Here is a 66-residue protein sequence, read N- to C-terminus: uncharacterized protein (66 aa).

It belongs to the YeeT/YkfH/YpjJ family.

This is an uncharacterized protein from Escherichia coli (strain K12).